The chain runs to 124 residues: Small ribosomal subunit protein uS12 (124 aa).

At aspartate 89 the chain carries 3-methylthioaspartic acid.

This sequence belongs to the universal ribosomal protein uS12 family. Part of the 30S ribosomal subunit. Contacts proteins S8 and S17. May interact with IF1 in the 30S initiation complex.

Functionally, with S4 and S5 plays an important role in translational accuracy. Interacts with and stabilizes bases of the 16S rRNA that are involved in tRNA selection in the A site and with the mRNA backbone. Located at the interface of the 30S and 50S subunits, it traverses the body of the 30S subunit contacting proteins on the other side and probably holding the rRNA structure together. The combined cluster of proteins S8, S12 and S17 appears to hold together the shoulder and platform of the 30S subunit. This is Small ribosomal subunit protein uS12 from Koribacter versatilis (strain Ellin345).